The sequence spans 322 residues: Mas-related G-protein coupled receptor member X1 (322 aa).

The Extracellular segment spans residues 1 to 30 (MDPTISSHDTESTPLNETGHPNCTPILTLS). Asn16 is a glycosylation site (N-linked (GlcNAc...) asparagine). Residues 31–51 (FLVLITTLVGLAGNTIVLWLL) form a helical membrane-spanning segment. The Cytoplasmic portion of the chain corresponds to 52–59 (GFRMRRKA). The helical transmembrane segment at 60–80 (ISVYILNLALADSFFLCCHFI) threads the bilayer. Over 81-100 (DSLLRIIDFYGLYAHKLSKD) the chain is Extracellular. A helical membrane pass occupies residues 101–121 (ILGNAAIIPYISGLSILSAIS). Over 122–142 (TERCLCVLWPIWYHCHRPRNM) the chain is Cytoplasmic. Residues 143–163 (SAIICALIWVLSFLMGILDWF) traverse the membrane as a helical segment. Residues 164-179 (SGFLGETHHHLWKNVD) are Extracellular-facing. The helical transmembrane segment at 180-200 (FIITAFLIFLFMLLSGSSLAL) threads the bilayer. Topologically, residues 201–223 (LLRILCGPRRKPLSRLYVTIALT) are cytoplasmic. The helical transmembrane segment at 224-244 (VMVYLICGLPLGLYLFLLYWF) threads the bilayer. The Extracellular segment spans residues 245 to 257 (GVHLHYPFCHIYQ). A helical transmembrane segment spans residues 258 to 278 (VTAVLSCVNSSANPIIYFLVG). The Cytoplasmic segment spans residues 279 to 322 (SFRQHRKHRSLKRVLKRALEDTPEEDEYTDSHLHKTTEISESRY).

It belongs to the G-protein coupled receptor 1 family. Mas subfamily. As to expression, expressed in a subset of IB4-positive small diameter nociceptive dorsal root neurons.

The protein localises to the cell membrane. Its function is as follows. Orphan receptor activated by neuropeptides terminating in Arg-Phe or Arg-Phe-amide. Mediates its action by association with G proteins that activate a phosphatidylinositol-calcium second messenger system. Its effect is mediated by G(q) and G(11) proteins. May regulate the function of nociceptive neurons by modulation of pain perception. This is Mas-related G-protein coupled receptor member X1 from Mus musculus (Mouse).